We begin with the raw amino-acid sequence, 254 residues long: Probable phosphatase Sbal_1472 (254 aa).

Residues histidine 8, histidine 10, histidine 16, histidine 41, glutamate 74, histidine 102, histidine 132, aspartate 193, and histidine 195 each contribute to the Zn(2+) site.

Belongs to the PHP family. Zn(2+) is required as a cofactor.

This Shewanella baltica (strain OS155 / ATCC BAA-1091) protein is Probable phosphatase Sbal_1472.